A 138-amino-acid chain; its full sequence is Aspartate 1-decarboxylase (138 aa).

Serine 25 acts as the Schiff-base intermediate with substrate; via pyruvic acid in catalysis. Serine 25 bears the Pyruvic acid (Ser) mark. Residue threonine 57 coordinates substrate. Tyrosine 58 acts as the Proton donor in catalysis. 73–75 contributes to the substrate binding site; the sequence is GAA. Positions 117-138 are disordered; sequence VDADPTAPPAPGLERSPLAEPV.

This sequence belongs to the PanD family. As to quaternary structure, heterooctamer of four alpha and four beta subunits. Pyruvate is required as a cofactor. Is synthesized initially as an inactive proenzyme, which is activated by self-cleavage at a specific serine bond to produce a beta-subunit with a hydroxyl group at its C-terminus and an alpha-subunit with a pyruvoyl group at its N-terminus.

The protein resides in the cytoplasm. The catalysed reaction is L-aspartate + H(+) = beta-alanine + CO2. The protein operates within cofactor biosynthesis; (R)-pantothenate biosynthesis; beta-alanine from L-aspartate: step 1/1. Catalyzes the pyruvoyl-dependent decarboxylation of aspartate to produce beta-alanine. This Clavibacter michiganensis subsp. michiganensis (strain NCPPB 382) protein is Aspartate 1-decarboxylase.